The primary structure comprises 829 residues: Periplasmic nitrate reductase (829 aa).

The tat-type signal signal peptide spans 1–29 (MKMTRRAFVKANAAASAAAVAGVTLPASA). One can recognise a 4Fe-4S Mo/W bis-MGD-type domain in the interval 41 to 97 (IKWDKAPCRFCGTGCSVLVGTQNGRVVATQGDPEAPVNKGLNCIKGYFLSKIMYGKD). Residues Cys-48, Cys-51, Cys-55, and Cys-83 each contribute to the [4Fe-4S] cluster site. Residues Lys-85, Gln-152, Asn-177, Cys-181, 214–221 (WGSNMAEM), 245–249 (STYYH), 264–266 (QSD), Met-374, Gln-378, Asn-484, 510–511 (SD), Lys-533, Asp-560, and 718–727 (TGRVLEHWHT) each bind Mo-bis(molybdopterin guanine dinucleotide). Phe-794 contributes to the substrate binding site. Positions 802 and 819 each coordinate Mo-bis(molybdopterin guanine dinucleotide).

The protein belongs to the prokaryotic molybdopterin-containing oxidoreductase family. NasA/NapA/NarB subfamily. Component of the periplasmic nitrate reductase NapAB complex composed of NapA and NapB. [4Fe-4S] cluster serves as cofactor. Mo-bis(molybdopterin guanine dinucleotide) is required as a cofactor. Post-translationally, predicted to be exported by the Tat system. The position of the signal peptide cleavage has not been experimentally proven.

The protein localises to the periplasm. It catalyses the reaction 2 Fe(II)-[cytochrome] + nitrate + 2 H(+) = 2 Fe(III)-[cytochrome] + nitrite + H2O. Catalytic subunit of the periplasmic nitrate reductase complex NapAB. Receives electrons from NapB and catalyzes the reduction of nitrate to nitrite. This Aliivibrio fischeri (strain MJ11) (Vibrio fischeri) protein is Periplasmic nitrate reductase.